A 367-amino-acid chain; its full sequence is Glycolate oxidase 3 (367 aa).

The FMN hydroxy acid dehydrogenase domain occupies 1–360; that stretch reads MELITNVSEY…TRNHVITDSD (360 aa). Tyrosine 25 provides a ligand contact to glyoxylate. FMN contacts are provided by residues 78–80, serine 107, 128–130, and threonine 156; these read PSA and QLY. Tyrosine 130 serves as a coordination point for glyoxylate. Arginine 165 lines the glyoxylate pocket. 2 residues coordinate FMN: lysine 231 and serine 253. Residues histidine 255 and arginine 258 each contribute to the glyoxylate site. The active-site Proton acceptor is the histidine 255. Residues 286–290 and 309–310 each bind FMN; these read DGGVR and GR. The Microbody targeting signal motif lies at 365–367; the sequence is SRL.

The protein belongs to the FMN-dependent alpha-hydroxy acid dehydrogenase family. In terms of assembly, homotetramer. FMN serves as cofactor.

It is found in the peroxisome. It catalyses the reaction glycolate + O2 = glyoxylate + H2O2. The protein operates within photosynthesis; photorespiration; glycine from 2-phosphoglycolate: step 2/3. Catalyzes the oxidation of glycolate to glyoxylate, with a reduction of O2 to H2O2. Is a key enzyme in photorespiration in green plants. The sequence is that of Glycolate oxidase 3 (GLO3) from Oryza sativa subsp. indica (Rice).